The sequence spans 507 residues: MEKFQIYLELDGSQQHNFLYPLLFREYIYALAQDHGLNRSTISLENGGYDNKSSSLSGKRLITLLYQQIHLSISANDSNPNQFIGHNNNLYSQMILEGFAVIVEIPFSLQLVSFLEGKEMAKSQNFQSIHSIFPFFEDNFSHLNYVLDVLIPHPIRPEILVQTFRYWVKDASSLHLLRFFLHEYFNWNSLITPKKSISGFSTSNPRFFLFLYNSHVYEYEFLFFFLRNQSSHLRLTSSGVLLERIHFYGKVDYFVEVFANGFQDILWLYKDLFMHYVRYQGKAILASKDTPLLMNKWKYYFVNLWQWHFHVWSQPVRAHINHLHKDSINFLGYLSSRRRNPLVVRSQMLENAYLIDNAMKKFETAVPIIPMVESLTKARFCNPLGNPISKPIWADSSDSHIIDRFVRICRNLSHYHSGSSKKKSLYRIKYILRVSCVKSLVRKHKSTVRVFLKRLGSEFFQDFLTEEEHVLSLIFSRASFTWRRLYRGRVWYLDIICINDLVNHDKF.

Belongs to the intron maturase 2 family. MatK subfamily.

Its subcellular location is the plastid. The protein resides in the chloroplast. In terms of biological role, usually encoded in the trnK tRNA gene intron. Probably assists in splicing its own and other chloroplast group II introns. This chain is Maturase K, found in Cupaniopsis anacardioides (Carrotwood).